The sequence spans 370 residues: Ni-sirohydrochlorin a,c-diamide reductive cyclase complex, component CfbD (370 aa).

This sequence belongs to the NifD/NifK/NifE/NifN family. As to quaternary structure, homodimer or monomer. The Ni-sirohydrochlorin a,c-diamide reductive cyclase complex is composed of a NifH homolog component CfbC and a NifD homolog component CfbD. [4Fe-4S] cluster is required as a cofactor.

It catalyses the reaction Ni-sirohydrochlorin a,c-diamide + 3 AH2 + ATP + H2O = 15,17(3)-seco-F430-17(3)-acid + 3 A + ADP + phosphate. Its function is as follows. Involved in the biosynthesis of the unique nickel-containing tetrapyrrole coenzyme F430, the prosthetic group of methyl-coenzyme M reductase (MCR), which plays a key role in methanogenesis and anaerobic methane oxidation. Catalyzes both the six-electron reduction of the tetrahydroporphyrin ring system and the gamma-lactamization of the c-acetamide side chain of Ni-sirohydrochlorin a,c-diamide to yield 15,17(3)-seco-F430-17(3)-acid (seco-F430), the last intermediate in the biosynthesis of the coenzyme F430. This is Ni-sirohydrochlorin a,c-diamide reductive cyclase complex, component CfbD from Methanosarcina acetivorans (strain ATCC 35395 / DSM 2834 / JCM 12185 / C2A).